A 160-amino-acid polypeptide reads, in one-letter code: MDKLTHINQQGDAHMVDVSDKKITTREATAMAIVSMKQSTLELILSSSNTKGDVLVIARIAGIYAAKKCWDLIPLCHPLMLSKIMVELTPNEKNATIEIKTLVKLDGKTGVEMEALTAASVTALTIYDMCKSVDRFIKIGEIQLLEKKGGKSGHWKLENV.

Substrate is bound by residues 75–77 (LCH) and 113–114 (ME). Asp-128 is an active-site residue.

Belongs to the MoaC family. Homohexamer; trimer of dimers.

The catalysed reaction is (8S)-3',8-cyclo-7,8-dihydroguanosine 5'-triphosphate = cyclic pyranopterin phosphate + diphosphate. Its pathway is cofactor biosynthesis; molybdopterin biosynthesis. Its function is as follows. Catalyzes the conversion of (8S)-3',8-cyclo-7,8-dihydroguanosine 5'-triphosphate to cyclic pyranopterin monophosphate (cPMP). The protein is Cyclic pyranopterin monophosphate synthase of Ruthia magnifica subsp. Calyptogena magnifica.